A 134-amino-acid polypeptide reads, in one-letter code: Large ribosomal subunit protein eL27 (134 aa).

Residues L5–H40 enclose the KOW domain.

The protein belongs to the eukaryotic ribosomal protein eL27 family.

The polypeptide is Large ribosomal subunit protein eL27 (RPL27) (Pyrobotrys stellatus (Green alga)).